Consider the following 92-residue polypeptide: Transcription factor PRE5 (92 aa).

In terms of domain architecture, bHLH spans 4–59; the sequence is RRSRQTSNASRISDDQMIDLVSKLRQFLPEIHERRRSDKVSASKVLQETCNYIRKL.

This sequence belongs to the bHLH protein family. Interacts with IBH1.

It localises to the nucleus. In terms of biological role, atypical and probable non DNA-binding bHLH transcription factor that integrates multiple signaling pathways to regulate cell elongation and plant development. May have a regulatory role in various aspects of gibberellin-dependent growth and development. The protein is Transcription factor PRE5 (PRE5) of Arabidopsis thaliana (Mouse-ear cress).